Here is a 538-residue protein sequence, read N- to C-terminus: Probable bifunctional tRNA threonylcarbamoyladenosine biosynthesis protein (538 aa).

The segment at 1 to 327 is kae1; the sequence is MIVLICLGIE…FRTDEVEAPW (327 aa). H111, H115, and Y132 together coordinate Fe cation. Residues 132-136, D164, G177, E181, and N260 contribute to the L-threonylcarbamoyladenylate site; that span reads YVSGG. D288 provides a ligand contact to Fe cation. One can recognise a Protein kinase domain in the interval 336–538; it reads KLPDNLIAKG…EIESRGRYTH (203 aa). ATP-binding positions include 342 to 350 and K363; that span reads IAKGAESDI. The active-site Proton acceptor; for kinase activity is D452.

It in the N-terminal section; belongs to the KAE1 / TsaD family. The protein in the C-terminal section; belongs to the protein kinase superfamily. Tyr protein kinase family. BUD32 subfamily. Component of the KEOPS complex that consists of Kae1, Bud32, Cgi121 and Pcc1; the whole complex dimerizes. It depends on Fe(2+) as a cofactor.

Its subcellular location is the cytoplasm. The enzyme catalyses L-seryl-[protein] + ATP = O-phospho-L-seryl-[protein] + ADP + H(+). The catalysed reaction is L-threonyl-[protein] + ATP = O-phospho-L-threonyl-[protein] + ADP + H(+). It catalyses the reaction L-threonylcarbamoyladenylate + adenosine(37) in tRNA = N(6)-L-threonylcarbamoyladenosine(37) in tRNA + AMP + H(+). Required for the formation of a threonylcarbamoyl group on adenosine at position 37 (t(6)A37) in tRNAs that read codons beginning with adenine. Is a component of the KEOPS complex that is probably involved in the transfer of the threonylcarbamoyl moiety of threonylcarbamoyl-AMP (TC-AMP) to the N6 group of A37. The Kae1 domain likely plays a direct catalytic role in this reaction. The Bud32 domain probably displays kinase activity that regulates Kae1 function. The polypeptide is Probable bifunctional tRNA threonylcarbamoyladenosine biosynthesis protein (Methanobrevibacter smithii (strain ATCC 35061 / DSM 861 / OCM 144 / PS)).